We begin with the raw amino-acid sequence, 456 residues long: Alcohol acyltransferase 16 (456 aa).

Active-site proton acceptor residues include His-167 and Asp-382.

It belongs to the plant acyltransferase family. As to expression, expressed in fruit.

It catalyses the reaction 3-(methylsulfanyl)propanoyl-CoA + butan-1-ol = butyl 3-(methylsulfanyl)propanoate + CoA. It carries out the reaction ethanol + benzoyl-CoA = ethyl benzoate + CoA. The enzyme catalyses butan-1-ol + benzoyl-CoA = butyl benzoate + CoA. The catalysed reaction is 2-(methylsulfanyl)acetyl-CoA + butan-1-ol = butyl 2-(methylsulfanyl)acetate + CoA. Its function is as follows. Involved in the biosynthesis of volatile esters which confer kiwifruit flavor. Alcohol acyl transferase that can use a wide range of alcohols as substrate to produce esters. Exhibits benzoyl-CoA:alcohol O-acyltransferase activity. In Actinidia chinensis var. chinensis (Chinese soft-hair kiwi), this protein is Alcohol acyltransferase 16.